The primary structure comprises 380 residues: Cytochrome b (380 aa).

4 helical membrane passes run 33-53, 77-98, 113-133, and 178-198; these read FGSL…FLAM, WLIR…FLHV, WNMG…GYVL, and FFAF…VHLL. Residues His83 and His97 each coordinate heme b. Positions 182 and 196 each coordinate heme b. His201 lines the a ubiquinone pocket. 4 helical membrane-spanning segments follow: residues 226 to 246, 288 to 308, 320 to 340, and 347 to 367; these read IKDF…TLFF, LGGV…PLLH, ITQI…WIGG, and FITI…IFMP.

The protein belongs to the cytochrome b family. The cytochrome bc1 complex contains 11 subunits: 3 respiratory subunits (MT-CYB, CYC1 and UQCRFS1), 2 core proteins (UQCRC1 and UQCRC2) and 6 low-molecular weight proteins (UQCRH/QCR6, UQCRB/QCR7, UQCRQ/QCR8, UQCR10/QCR9, UQCR11/QCR10 and a cleavage product of UQCRFS1). This cytochrome bc1 complex then forms a dimer. The cofactor is heme b.

The protein resides in the mitochondrion inner membrane. In terms of biological role, component of the ubiquinol-cytochrome c reductase complex (complex III or cytochrome b-c1 complex) that is part of the mitochondrial respiratory chain. The b-c1 complex mediates electron transfer from ubiquinol to cytochrome c. Contributes to the generation of a proton gradient across the mitochondrial membrane that is then used for ATP synthesis. This is Cytochrome b (MT-CYB) from Microtus oregoni (Creeping vole).